The sequence spans 156 residues: Small ribosomal subunit protein uS7 (156 aa).

It belongs to the universal ribosomal protein uS7 family. As to quaternary structure, part of the 30S ribosomal subunit. Contacts proteins S9 and S11.

Functionally, one of the primary rRNA binding proteins, it binds directly to 16S rRNA where it nucleates assembly of the head domain of the 30S subunit. Is located at the subunit interface close to the decoding center, probably blocks exit of the E-site tRNA. The sequence is that of Small ribosomal subunit protein uS7 (rpsG) from Geobacillus stearothermophilus (Bacillus stearothermophilus).